We begin with the raw amino-acid sequence, 171 residues long: Large ribosomal subunit protein bL9 (171 aa).

The protein belongs to the bacterial ribosomal protein bL9 family.

In terms of biological role, binds to the 23S rRNA. This chain is Large ribosomal subunit protein bL9, found in Rickettsia africae (strain ESF-5).